The sequence spans 378 residues: Acid phosphatase-like protein XcAP-2 (378 aa).

The first 19 residues, 1–19 (MKTTILLLVVLTIVQLSKA), serve as a signal peptide directing secretion. 3 cysteine pairs are disulfide-bonded: cysteine 147–cysteine 374, cysteine 168–cysteine 220, and cysteine 347–cysteine 351.

This sequence belongs to the histidine acid phosphatase family.

It is found in the secreted. Its function is as follows. Probably modulates blood feeding of fleas on vertebrate species by binding and sequestering different mediators involved in the host response. Binds histamine. Binds leukotriene B4, leukotriene C4, leukotriene D4 and leukotriene E4. Does not bind serotonin, adrenaline, noradrenaline, ADP, and stable analogs of thromboxane A2: U-46619 and cTXA2. The chain is Acid phosphatase-like protein XcAP-2 from Xenopsylla cheopis (Oriental rat flea).